Reading from the N-terminus, the 163-residue chain is Large ribosomal subunit protein uL10 (163 aa).

The protein belongs to the universal ribosomal protein uL10 family. As to quaternary structure, part of the ribosomal stalk of the 50S ribosomal subunit. The N-terminus interacts with L11 and the large rRNA to form the base of the stalk. The C-terminus forms an elongated spine to which L12 dimers bind in a sequential fashion forming a multimeric L10(L12)X complex.

Functionally, forms part of the ribosomal stalk, playing a central role in the interaction of the ribosome with GTP-bound translation factors. The sequence is that of Large ribosomal subunit protein uL10 from Haemophilus influenzae (strain PittGG).